We begin with the raw amino-acid sequence, 274 residues long: Syntaxin-12 (274 aa).

2 disordered regions span residues 1–20 (MSYG…PQPR) and 128–147 (EKES…EDRQ). Ser-2 is subject to N-acetylserine. Over 2-250 (SYGPLDMYRN…AYYQKKSRKK (249 aa)) the chain is Cytoplasmic. Residues 33 to 130 (IQRISQATAQ…QRKVSEKEKE (98 aa)) are a coiled coil. A phosphoserine mark is found at Ser-139, Ser-142, Ser-218, and Ser-225. Residues 178 to 240 (LELIKERETA…ERATDQLQRA (63 aa)) form the t-SNARE coiled-coil homology domain. The chain crosses the membrane as a helical; Anchor for type IV membrane protein span at residues 251 to 271 (MCILVLVLSVIVTVLVVVIWV). The Vesicular segment spans residues 272–274 (ASK).

This sequence belongs to the syntaxin family. As to quaternary structure, associates with the BLOC-1 complex. Interacts with BLOC1S6. Interacts with NAPA and SNAP23. Identified in a complex containing STX6, STX12, VAMP4 and VTI1A. Interacts with GRIPAP1. Forms a complex with GRIP1, GRIA2 and NSG1; controls the intracellular fate of AMPAR and the endosomal sorting of the GRIA2 subunit toward recycling and membrane targeting. Interacts with NSG1. Interacts with TPC1. Interacts (via N-terminus) with VPS13B.

Its subcellular location is the endosome membrane. The protein resides in the golgi apparatus membrane. It is found in the endomembrane system. It localises to the early endosome membrane. The protein localises to the recycling endosome membrane. Its function is as follows. SNARE promoting fusion of transport vesicles with target membranes. Together with SNARE STX6, promotes movement of vesicles from endosomes to the cell membrane, and may therefore function in the endocytic recycling pathway. Through complex formation with GRIP1, GRIA2 and NSG1 controls the intracellular fate of AMPAR and the endosomal sorting of the GRIA2 subunit toward recycling and membrane targeting. This Mus musculus (Mouse) protein is Syntaxin-12 (Stx12).